The chain runs to 36 residues: Photosystem II reaction center protein M (36 aa).

A helical transmembrane segment spans residues 5–25 (ILGVIAVALFILIPTSFLLIL).

This sequence belongs to the PsbM family. In terms of assembly, PSII is composed of 1 copy each of membrane proteins PsbA, PsbB, PsbC, PsbD, PsbE, PsbF, PsbH, PsbI, PsbJ, PsbK, PsbL, PsbM, PsbT, PsbY, PsbZ, Psb30/Ycf12, at least 3 peripheral proteins of the oxygen-evolving complex and a large number of cofactors. It forms dimeric complexes.

It is found in the plastid. The protein localises to the chloroplast thylakoid membrane. In terms of biological role, one of the components of the core complex of photosystem II (PSII). PSII is a light-driven water:plastoquinone oxidoreductase that uses light energy to abstract electrons from H(2)O, generating O(2) and a proton gradient subsequently used for ATP formation. It consists of a core antenna complex that captures photons, and an electron transfer chain that converts photonic excitation into a charge separation. This subunit is found at the monomer-monomer interface. In Bigelowiella natans (Pedinomonas minutissima), this protein is Photosystem II reaction center protein M.